The chain runs to 206 residues: Protein tyrosine phosphatase receptor type C-associated protein (206 aa).

Residues 34-54 (VTVVLLLLLLLLLATGLALAW) traverse the membrane as a helical segment. Positions 98 to 173 (GSTDNDLERQ…PGPASAGGSA (76 aa)) are disordered. Residues S99 and S153 each carry the phosphoserine modification. A compositionally biased stretch (low complexity) spans 161–173 (LGSPGPASAGGSA).

Interacts with CD45/PTPRC. Post-translationally, phosphorylated on tyrosine residues.

The protein localises to the membrane. The polypeptide is Protein tyrosine phosphatase receptor type C-associated protein (PTPRCAP) (Homo sapiens (Human)).